Reading from the N-terminus, the 564-residue chain is Pyruvate decarboxylase (564 aa).

D28 and H115 together coordinate pyruvate. Residues T390 and 413–415 (GSI) contribute to the thiamine diphosphate site. Mg(2+) is bound at residue D444. Residues 445 to 446 (GS) and 471 to 476 (NNGYTI) each bind thiamine diphosphate. Residues N471 and G473 each coordinate Mg(2+). A pyruvate-binding site is contributed by E477.

It belongs to the TPP enzyme family. Homotetramer. Mg(2+) serves as cofactor. The cofactor is thiamine diphosphate.

The enzyme catalyses a 2-oxocarboxylate + H(+) = an aldehyde + CO2. The catalysed reaction is pyruvate + H(+) = acetaldehyde + CO2. The sequence is that of Pyruvate decarboxylase (PDC) from Hanseniaspora uvarum (Yeast).